The chain runs to 343 residues: UDP-N-acetylglucosamine--N-acetylmuramyl-(pentapeptide) pyrophosphoryl-undecaprenol N-acetylglucosamine transferase (343 aa).

UDP-N-acetyl-alpha-D-glucosamine-binding positions include 10–12 (TGG), Asn-113, Ser-174, and Gln-275.

This sequence belongs to the glycosyltransferase 28 family. MurG subfamily.

The protein localises to the cell membrane. The enzyme catalyses di-trans,octa-cis-undecaprenyl diphospho-N-acetyl-alpha-D-muramoyl-L-alanyl-D-glutamyl-meso-2,6-diaminopimeloyl-D-alanyl-D-alanine + UDP-N-acetyl-alpha-D-glucosamine = di-trans,octa-cis-undecaprenyl diphospho-[N-acetyl-alpha-D-glucosaminyl-(1-&gt;4)]-N-acetyl-alpha-D-muramoyl-L-alanyl-D-glutamyl-meso-2,6-diaminopimeloyl-D-alanyl-D-alanine + UDP + H(+). It functions in the pathway cell wall biogenesis; peptidoglycan biosynthesis. Its function is as follows. Cell wall formation. Catalyzes the transfer of a GlcNAc subunit on undecaprenyl-pyrophosphoryl-MurNAc-pentapeptide (lipid intermediate I) to form undecaprenyl-pyrophosphoryl-MurNAc-(pentapeptide)GlcNAc (lipid intermediate II). This Wolbachia sp. subsp. Brugia malayi (strain TRS) protein is UDP-N-acetylglucosamine--N-acetylmuramyl-(pentapeptide) pyrophosphoryl-undecaprenol N-acetylglucosamine transferase.